Consider the following 231-residue polypeptide: MNMMTVKQQGVWAALLWPYLLTASIPLDCKEEQGSLSRCPSISQEKLLDRVIQHAELIYRVSEESCSMFEEMFVPFPLRLQRNQAGYACITKALPIPSSKSEIQQISDTWLLHSVLMLVQSWIEPLVYLQTTLDRYDNAPDMLLNKTKWVSDKLISLEQGVVVLIRKMLDEGMLTATYNEQGLFQYDAQPDMLESVMRDYTLLSCFKKDAHKMEIFLKLLKCRQTDKYNCA.

Residues 1 to 24 (MNMMTVKQQGVWAALLWPYLLTAS) form the signal peptide. Intrachain disulfides connect Cys29/Cys39, Cys89/Cys205, and Cys222/Cys230. A glycan (N-linked (GlcNAc...) asparagine) is linked at Asn145.

It belongs to the somatotropin/prolactin family. In terms of tissue distribution, pituitary gland.

The protein resides in the secreted. In Paralichthys olivaceus (Bastard halibut), this protein is Somatolactin.